The primary structure comprises 237 residues: Sugar fermentation stimulation protein homolog (237 aa).

The protein belongs to the SfsA family.

This Synechocystis sp. (strain ATCC 27184 / PCC 6803 / Kazusa) protein is Sugar fermentation stimulation protein homolog.